The primary structure comprises 320 residues: Cytochrome f (320 aa).

Residues 1–35 (MQNRNTFSWVKEQMTRSIFVSMMIYIITRASISNA) form the signal peptide. Residues Y36, C56, C59, and H60 each coordinate heme. A helical transmembrane segment spans residues 286 to 306 (IQGLFLFLASVILAQIFLVLK).

Belongs to the cytochrome f family. In terms of assembly, the 4 large subunits of the cytochrome b6-f complex are cytochrome b6, subunit IV (17 kDa polypeptide, petD), cytochrome f and the Rieske protein, while the 4 small subunits are PetG, PetL, PetM and PetN. The complex functions as a dimer. Heme is required as a cofactor.

It is found in the plastid. It localises to the chloroplast thylakoid membrane. In terms of biological role, component of the cytochrome b6-f complex, which mediates electron transfer between photosystem II (PSII) and photosystem I (PSI), cyclic electron flow around PSI, and state transitions. The chain is Cytochrome f from Amborella trichopoda.